A 240-amino-acid polypeptide reads, in one-letter code: Phosphoribosylaminoimidazole-succinocarboxamide synthase (240 aa).

Belongs to the SAICAR synthetase family.

The catalysed reaction is 5-amino-1-(5-phospho-D-ribosyl)imidazole-4-carboxylate + L-aspartate + ATP = (2S)-2-[5-amino-1-(5-phospho-beta-D-ribosyl)imidazole-4-carboxamido]succinate + ADP + phosphate + 2 H(+). It participates in purine metabolism; IMP biosynthesis via de novo pathway; 5-amino-1-(5-phospho-D-ribosyl)imidazole-4-carboxamide from 5-amino-1-(5-phospho-D-ribosyl)imidazole-4-carboxylate: step 1/2. The protein is Phosphoribosylaminoimidazole-succinocarboxamide synthase of Limosilactobacillus fermentum (strain NBRC 3956 / LMG 18251) (Lactobacillus fermentum).